Reading from the N-terminus, the 201-residue chain is Large ribosomal subunit protein eL15A (201 aa).

Residues 161 to 182 (SRGLTSIGKKSRGIGKGHRFNN) are disordered. Residues 169 to 179 (KKSRGIGKGHR) show a composition bias toward basic residues.

It belongs to the eukaryotic ribosomal protein eL15 family. As to quaternary structure, component of the large ribosomal subunit (LSU). Mature yeast ribosomes consist of a small (40S) and a large (60S) subunit. The 40S small subunit contains 1 molecule of ribosomal RNA (18S rRNA) and at least 33 different proteins. The large 60S subunit contains 3 rRNA molecules (25S, 5.8S and 5S rRNA) and at least 46 different proteins.

Its subcellular location is the cytoplasm. It is found in the nucleus. The protein resides in the nucleolus. In terms of biological role, component of the ribosome, a large ribonucleoprotein complex responsible for the synthesis of proteins in the cell. The small ribosomal subunit (SSU) binds messenger RNAs (mRNAs) and translates the encoded message by selecting cognate aminoacyl-transfer RNA (tRNA) molecules. The large subunit (LSU) contains the ribosomal catalytic site termed the peptidyl transferase center (PTC), which catalyzes the formation of peptide bonds, thereby polymerizing the amino acids delivered by tRNAs into a polypeptide chain. The nascent polypeptides leave the ribosome through a tunnel in the LSU and interact with protein factors that function in enzymatic processing, targeting, and the membrane insertion of nascent chains at the exit of the ribosomal tunnel. In Schizosaccharomyces pombe (strain 972 / ATCC 24843) (Fission yeast), this protein is Large ribosomal subunit protein eL15A (rpl15).